The chain runs to 127 residues: Mu-like prophage FluMu protein gp41 (127 aa).

The tract at residues 107–127 (VSRGRLDTADQETGKDLSAVS) is disordered. Positions 110 to 121 (GRLDTADQETGK) are enriched in basic and acidic residues.

The protein to phage Mu protein gp41.

The chain is Mu-like prophage FluMu protein gp41 from Haemophilus influenzae (strain ATCC 51907 / DSM 11121 / KW20 / Rd).